The following is a 291-amino-acid chain: Phytanoyl-CoA dioxygenase domain-containing protein 1 (291 aa).

A Phosphothreonine modification is found at threonine 55. 2-oxoglutarate is bound by residues lysine 102, methionine 141, 156 to 158 (HQD), and tryptophan 174. Residues histidine 156 and aspartate 158 each coordinate Fe cation. Histidine 246 contributes to the Fe cation binding site. 2-oxoglutarate contacts are provided by serine 248 and arginine 257.

Belongs to the PhyH family. PHYHD1 subfamily. It depends on Fe cation as a cofactor.

Functionally, 2-oxoglutarate(2OG)-dependent dioxygenase that catalyzes the conversion of 2-oxoglutarate to succinate and CO(2) in an iron-dependent manner. However, does not couple 2OG turnover to the hydroxylation of acyl-coenzyme A derivatives, implying that it is not directly involved in phytanoyl coenzyme-A metabolism. Does not show detectable activity towards fatty acid CoA thioesters. This Mus musculus (Mouse) protein is Phytanoyl-CoA dioxygenase domain-containing protein 1.